A 469-amino-acid chain; its full sequence is UDP-N-acetylmuramate--L-alanine ligase (469 aa).

118-124 (GTHGKTT) provides a ligand contact to ATP.

It belongs to the MurCDEF family.

It localises to the cytoplasm. The enzyme catalyses UDP-N-acetyl-alpha-D-muramate + L-alanine + ATP = UDP-N-acetyl-alpha-D-muramoyl-L-alanine + ADP + phosphate + H(+). It participates in cell wall biogenesis; peptidoglycan biosynthesis. Functionally, cell wall formation. The chain is UDP-N-acetylmuramate--L-alanine ligase from Lachnoclostridium phytofermentans (strain ATCC 700394 / DSM 18823 / ISDg) (Clostridium phytofermentans).